The chain runs to 329 residues: DNA-directed RNA polymerase subunit alpha (329 aa).

The interval 1–235 (MQGSVTEFLK…EQLDAFVDLR (235 aa)) is alpha N-terminal domain (alpha-NTD). The alpha C-terminal domain (alpha-CTD) stretch occupies residues 249 to 329 (FDPILLRPVD…NWPPASIAED (81 aa)).

It belongs to the RNA polymerase alpha chain family. As to quaternary structure, homodimer. The RNAP catalytic core consists of 2 alpha, 1 beta, 1 beta' and 1 omega subunit. When a sigma factor is associated with the core the holoenzyme is formed, which can initiate transcription.

The catalysed reaction is RNA(n) + a ribonucleoside 5'-triphosphate = RNA(n+1) + diphosphate. Its function is as follows. DNA-dependent RNA polymerase catalyzes the transcription of DNA into RNA using the four ribonucleoside triphosphates as substrates. In Aliivibrio fischeri (strain ATCC 700601 / ES114) (Vibrio fischeri), this protein is DNA-directed RNA polymerase subunit alpha.